Consider the following 523-residue polypeptide: MARVLQLSLTALLLPVAIAMHSDCIFKKEQAMCLERIQRANDLMGLNESSPGCPGMWDNITCWKPAQVGEMVLVSCPEVFRIFNPDQVWMTETIGDSGFADSNSLEITDMGVVGRNCTEDGWSEPFPHYFDACGFDDYEPESGDQDYYYLSVKALYTVGYSTSLATLTTAMVILCRFRKLHCTRNFIHMNLFVSFMLRAISVFIKDWILYAEQDSSHCFVSTVECKAVMVFFHYCVVSNYFWLFIEGLYLFTLLVETFFPERRYFYWYTIIGWGTPTVCVTVWAVLRLYFDDAGCWDMNDSTALWWVIKGPVVGSIMVNFVLFIGIIIILVQKLQSPDMGGNESSIYLTNLRLRVPKKTREDPLPVPSDQHSPPFLSCVQKCYCKPQRAQQHSCKMSELSTITLRLARSTLLLIPLFGIHYTVFAFSPENVSKRERLVFELGLGSFQGFVVAVLYCFLNGEVQAEIKRKWRSWKVNRYFTMDFKHRHPSLASSGVNGGTQLSILSKSSSQLRMSSLPADNLAT.

Residues 1 to 19 (MARVLQLSLTALLLPVAIA) form the signal peptide. Topologically, residues 20 to 151 (MHSDCIFKKE…SGDQDYYYLS (132 aa)) are extracellular. Intrachain disulfides connect cysteine 33–cysteine 62, cysteine 53–cysteine 117, and cysteine 76–cysteine 133. Residues asparagine 47, asparagine 59, and asparagine 116 are each glycosylated (N-linked (GlcNAc...) asparagine). Residues 124–138 (EPFPHYFDACGFDDY) are important for ADCYAP1/PACAP ligand binding and specificity. The segment at 124 to 138 (EPFPHYFDACGFDDY) is important for ligand binding and specificity. A helical membrane pass occupies residues 152–176 (VKALYTVGYSTSLATLTTAMVILCR). Residues 177–186 (FRKLHCTRNF) lie on the Cytoplasmic side of the membrane. The chain crosses the membrane as a helical span at residues 187–207 (IHMNLFVSFMLRAISVFIKDW). Topologically, residues 208–222 (ILYAEQDSSHCFVST) are extracellular. A helical transmembrane segment spans residues 223–248 (VECKAVMVFFHYCVVSNYFWLFIEGL). Residues cysteine 225 and cysteine 295 are joined by a disulfide bond. Over 249 to 266 (YLFTLLVETFFPERRYFY) the chain is Cytoplasmic. The chain crosses the membrane as a helical span at residues 267 to 289 (WYTIIGWGTPTVCVTVWAVLRLY). Topologically, residues 290–301 (FDDAGCWDMNDS) are extracellular. A helical membrane pass occupies residues 302–328 (TALWWVIKGPVVGSIMVNFVLFIGIII). The Cytoplasmic segment spans residues 329–346 (ILVQKLQSPDMGGNESSI). A helical transmembrane segment spans residues 347–429 (YLTNLRLRVP…HYTVFAFSPE (83 aa)). Over 430-434 (NVSKR) the chain is Extracellular. Residues 435-458 (ERLVFELGLGSFQGFVVAVLYCFL) form a helical membrane-spanning segment. Residues 459–523 (NGEVQAEIKR…SSLPADNLAT (65 aa)) are Cytoplasmic-facing. A phosphoserine mark is found at serine 489 and serine 502.

This sequence belongs to the G-protein coupled receptor 2 family. As to quaternary structure, interacts with maxadilan, a vasodilator peptide from Lutzomyia longipalpis saliva; the interaction results in ADCYAP1R1 activation. Hypothalamus, anterior pituitary, adrenal medulla, testicular germ cells.

It localises to the cell membrane. Its function is as follows. G protein-coupled receptor activated by the neuropeptide pituitary adenylate cyclase-activating polypeptide (ADCYAP1/PACAP). Binds both PACAP27 and PACAP38 bioactive peptides. Ligand binding causes a conformation change that triggers signaling via guanine nucleotide-binding proteins (G proteins) and modulates the activity of downstream effectors. Activates cAMP-dependent pathway. May regulate the release of adrenocorticotropin, luteinizing hormone, growth hormone, prolactin, epinephrine, and catecholamine. May play a role in spermatogenesis and sperm motility. Causes smooth muscle relaxation and secretion in the gastrointestinal tract. In Rattus norvegicus (Rat), this protein is Pituitary adenylate cyclase-activating polypeptide type I receptor.